The sequence spans 120 residues: Large ribosomal subunit protein uL22 (120 aa).

Belongs to the universal ribosomal protein uL22 family. Part of the 50S ribosomal subunit.

This protein binds specifically to 23S rRNA; its binding is stimulated by other ribosomal proteins, e.g. L4, L17, and L20. It is important during the early stages of 50S assembly. It makes multiple contacts with different domains of the 23S rRNA in the assembled 50S subunit and ribosome. Functionally, the globular domain of the protein is located near the polypeptide exit tunnel on the outside of the subunit, while an extended beta-hairpin is found that lines the wall of the exit tunnel in the center of the 70S ribosome. The protein is Large ribosomal subunit protein uL22 of Acaryochloris marina (strain MBIC 11017).